The sequence spans 91 residues: Probable translocation protein y4yM (91 aa).

The next 2 helical transmembrane spans lie at 15 to 35 (VVFM…GLTI) and 55 to 75 (LLVV…PLIE).

It belongs to the FliQ/MopD/SpaQ family.

The protein resides in the cell membrane. Its function is as follows. Could be involved in the secretion of an unknown factor. The chain is Probable translocation protein y4yM from Sinorhizobium fredii (strain NBRC 101917 / NGR234).